We begin with the raw amino-acid sequence, 855 residues long: Discoidin domain-containing receptor 2 (855 aa).

The N-terminal stretch at 1-21 (MILIPRMLLVLFLLLPILSSA) is a signal peptide. Topologically, residues 22–399 (KAQVNPAICR…MLKVDDSNTR (378 aa)) are extracellular. The 156-residue stretch at 30–185 (CRYPLGMSGG…VCMRVELYGC (156 aa)) folds into the F5/8 type C domain. 2 cysteine pairs are disulfide-bonded: Cys-30–Cys-185 and Cys-73–Cys-177. 5 N-linked (GlcNAc...) asparagine glycosylation sites follow: Asn-121, Asn-213, Asn-261, Asn-280, and Asn-372. A helical transmembrane segment spans residues 400-421 (ILIGCLVAIIFILLAIIVIILW). Residues 422–855 (RQFWQKMLEK…HLLLLQQGDE (434 aa)) are Cytoplasmic-facing. Residues 452–471 (SMFNNNRSSSPSEQGSNSTY) are disordered. Tyr-471 is modified (phosphotyrosine; by SRC and autocatalysis). The Protein kinase domain maps to 563-849 (LTFKEKLGEG…PSFQEIHLLL (287 aa)). Residues 569–577 (LGEGQFGEV) and Lys-608 each bind ATP. The active-site Proton acceptor is the Asp-710. Tyr-736, Tyr-740, and Tyr-741 each carry phosphotyrosine; by SRC and autocatalysis.

This sequence belongs to the protein kinase superfamily. Tyr protein kinase family. Insulin receptor subfamily. As to quaternary structure, binds hydroxyproline-rich sequence motifs in fibrillar, glycosylated collagen, such as the GQOGVMGFO motif, where O stands for hydroxyproline. Interacts with SRC. Interacts (tyrosine phosphorylated) with SHC1. Post-translationally, N-glycosylated. In terms of processing, tyrosine phosphorylated in response to collagen binding. Phosphorylated by SRC; this is required for activation and subsequent autophosphorylation on additional tyrosine residues. As to expression, detected in osteocytes, osteoblastic cells in subchondral bone, bone lining cells, tibia and cartilage (at protein level). Detected at high levels in heart and lung, and at low levels in brain, placenta, liver, skeletal muscle, pancreas, and kidney.

The protein resides in the cell membrane. The enzyme catalyses L-tyrosyl-[protein] + ATP = O-phospho-L-tyrosyl-[protein] + ADP + H(+). With respect to regulation, present in an inactive state in the absence of collagen binding and phosphorylation by SRC. Tyrosine phosphorylation enhances the affinity for ATP and the catalytic activity. Its function is as follows. Tyrosine kinase involved in the regulation of tissues remodeling. It functions as a cell surface receptor for fibrillar collagen and regulates cell differentiation, remodeling of the extracellular matrix, cell migration and cell proliferation. Required for normal bone development. Regulates osteoblast differentiation and chondrocyte maturation via a signaling pathway that involves MAP kinases and leads to the activation of the transcription factor RUNX2. Regulates remodeling of the extracellular matrix by up-regulation of the collagenases MMP1, MMP2 and MMP13, and thereby facilitates cell migration and tumor cell invasion. Promotes fibroblast migration and proliferation, and thereby contributes to cutaneous wound healing. This Homo sapiens (Human) protein is Discoidin domain-containing receptor 2 (DDR2).